A 347-amino-acid polypeptide reads, in one-letter code: MNPLIFSTILATIIMGTVIVMTSSHWLTIWIGFEMNMLAIIPMLMKQHNPRSTEAATKYFLTQATASMLLMLAVIINLTHTGQWTITKSFNPLASIIMTIALTMKLGLSPFHFWVPEVAQGIPLSSCLILLTWQKLAPLSILYMISPTINLNLLLSMSLISIAIGGWGGLNQTQLRKIMAYSSIAHMGWMTAVLAYNPTMTMLNLLVYITMTTTMFMLLIKSASTTTLSLAIMWNKIPLVTTLTLTIMLSLGGLPPLTGFLPKWMIIQELTKNNNIILPTLMAIMALLSLYFYMRLTYATTLTMFPTTNDLKIKWQFEPKKHMNLLSPLIVTSTLTLPLAPTMLLLD.

11 consecutive transmembrane segments (helical) span residues 1–21, 25–45, 59–79, 96–116, 127–147, 149–169, 178–198, 200–220, 237–257, 276–296, and 325–345; these read MNPL…VIVM, HWLT…PMLM, YFLT…INLT, IIMT…FWVP, CLIL…MISP, INLN…GWGG, IMAY…AYNP, MTML…MLLI, IPLV…LPPL, IILP…YMRL, and LLSP…TMLL.

The protein belongs to the complex I subunit 2 family. As to quaternary structure, core subunit of respiratory chain NADH dehydrogenase (Complex I) which is composed of 45 different subunits. Interacts with TMEM242.

It is found in the mitochondrion inner membrane. The catalysed reaction is a ubiquinone + NADH + 5 H(+)(in) = a ubiquinol + NAD(+) + 4 H(+)(out). In terms of biological role, core subunit of the mitochondrial membrane respiratory chain NADH dehydrogenase (Complex I) which catalyzes electron transfer from NADH through the respiratory chain, using ubiquinone as an electron acceptor. Essential for the catalytic activity and assembly of complex I. The chain is NADH-ubiquinone oxidoreductase chain 2 from Natalus tumidirostris (Trinidadian funnel-eared bat).